The chain runs to 331 residues: Flavonol synthase 1 (331 aa).

The Fe2OG dioxygenase domain maps to 191–292 (DAIELLLKIN…RMSWPVFCSP (102 aa)). Fe cation-binding residues include H217, D219, and H273. R283 contacts 2-oxoglutarate.

It belongs to the iron/ascorbate-dependent oxidoreductase family. Requires L-ascorbate as cofactor. Fe(2+) serves as cofactor. Expressed in young cromes.

The catalysed reaction is a (2R,3R)-dihydroflavonol + 2-oxoglutarate + O2 = a flavonol + succinate + CO2 + H2O. The enzyme catalyses (2R,3R)-dihydrokaempferol + 2-oxoglutarate + O2 = kaempferol + succinate + CO2 + H2O + H(+). It carries out the reaction (2R,3R)-dihydroquercetin + 2-oxoglutarate + O2 = quercetin + succinate + CO2 + H2O + H(+). It catalyses the reaction (2R,3R)-dihydromyricetin + 2-oxoglutarate + O2 = myricetin + succinate + CO2 + H2O + H(+). It participates in flavonoid metabolism. Functionally, catalyzes the formation of flavonols from dihydroflavonols. Can act on dihydrokaempferol to produce kaempferol, on dihydroquercetin to produce quercitin and on dihydromyricetin to produce myricetin. The polypeptide is Flavonol synthase 1 (Crocosmia x crocosmiiflora (Montbretia)).